Consider the following 669-residue polypeptide: Acyl-coenzyme A oxidase 1 (669 aa).

The FAD site is built by T152 and G191. E434 functions as the Proton acceptor in the catalytic mechanism. Y544 is modified (phosphotyrosine). S551 carries the post-translational modification Phosphoserine. The short motif at 667–669 (AHL) is the Microbody targeting signal element.

Belongs to the acyl-CoA oxidase family. In terms of assembly, homodimer. It depends on FAD as a cofactor. As to expression, expressed in glia.

It localises to the peroxisome. The protein resides in the nucleus. The catalysed reaction is a 2,3-saturated acyl-CoA + O2 = a (2E)-enoyl-CoA + H2O2. It participates in lipid metabolism; peroxisomal fatty acid beta-oxidation. Functionally, catalyzes the desaturation of acyl-CoAs to 2-trans-enoyl-CoAs. First enzyme of the fatty acid beta-oxidation pathway. This is Acyl-coenzyme A oxidase 1 from Drosophila melanogaster (Fruit fly).